The sequence spans 286 residues: Penicillin-insensitive murein endopeptidase (286 aa).

The signal sequence occupies residues M1–A22. H117, H120, D127, D152, and H218 together coordinate Zn(2+).

The protein belongs to the peptidase M74 family. It depends on Zn(2+) as a cofactor.

The protein localises to the periplasm. Its function is as follows. Murein endopeptidase that cleaves the D-alanyl-meso-2,6-diamino-pimelyl amide bond that connects peptidoglycan strands. Likely plays a role in the removal of murein from the sacculus. In Haemophilus influenzae (strain ATCC 51907 / DSM 11121 / KW20 / Rd), this protein is Penicillin-insensitive murein endopeptidase (mepA).